A 370-amino-acid polypeptide reads, in one-letter code: Phosphoribosylformylglycinamidine cyclo-ligase (370 aa).

This sequence belongs to the AIR synthase family.

It localises to the cytoplasm. It catalyses the reaction 2-formamido-N(1)-(5-O-phospho-beta-D-ribosyl)acetamidine + ATP = 5-amino-1-(5-phospho-beta-D-ribosyl)imidazole + ADP + phosphate + H(+). Its pathway is purine metabolism; IMP biosynthesis via de novo pathway; 5-amino-1-(5-phospho-D-ribosyl)imidazole from N(2)-formyl-N(1)-(5-phospho-D-ribosyl)glycinamide: step 2/2. This is Phosphoribosylformylglycinamidine cyclo-ligase from Rhodospirillum rubrum (strain ATCC 11170 / ATH 1.1.1 / DSM 467 / LMG 4362 / NCIMB 8255 / S1).